Here is a 317-residue protein sequence, read N- to C-terminus: Protoheme IX farnesyltransferase (317 aa).

A run of 8 helical transmembrane segments spans residues 39–59 (VLYLVVYTGAAGLLVAPGGIN), 60–80 (PILGFTAILCIAMAAGAAGAI), 109–129 (GALAYGVALSALSVLLMWLAT), 131–151 (LLAAGLLAASIGFYVFIYTMW), 160–180 (IVIGGAAGAFPPVIGWAAATG), 184–204 (LLPVLLFAIIFFWTPPHFWAL), 249–269 (VLHLAGPVYGASAMVLGLAFV), and 297–317 (FKFSILYLFLIFGALVLDHLV).

Belongs to the UbiA prenyltransferase family. Protoheme IX farnesyltransferase subfamily.

Its subcellular location is the cell inner membrane. It catalyses the reaction heme b + (2E,6E)-farnesyl diphosphate + H2O = Fe(II)-heme o + diphosphate. The protein operates within porphyrin-containing compound metabolism; heme O biosynthesis; heme O from protoheme: step 1/1. Functionally, converts heme B (protoheme IX) to heme O by substitution of the vinyl group on carbon 2 of heme B porphyrin ring with a hydroxyethyl farnesyl side group. This is Protoheme IX farnesyltransferase from Acidiphilium cryptum (strain JF-5).